A 449-amino-acid chain; its full sequence is MSHYDLILRNGNVVCPDGVRKADIAVSDGKIVLIAEEIPGDAKEIIDAAGKHIFPGITDGHVHFNDPGRTEWETITTGSSALAAGGGVAYFDMPLNCSPCTLDAVNFNNKLAVAQKDSLVDYGFWGGLTSANLDKLDELAECGVIGFKAFACHSGIDEFPRMDDYTALVGMEKLAKLGLPLMVHCENAEITKELTELSLANNRTGVRDYFAARPPITEIENVSRMITFAEETGCKLIIAHISTAKAVELVAQARARGVDVYCETIGHYLYLTGDDVERLGTVAKCSPPIRDGENQLQMWGRLFNDNIAFVSSDHSPCDPKLKNGEFMRVWGGISACQTTLQGLLTHAYHDRKFPLVKIAQLTAQHVNEIFKIKDKGQIALGYDADFALVDLDHEFTLQAEDLFYKHKVSPYVGDRFRGSVSQTILRGTTIYKDGKIVSQPIGKHLRPHQ.

Positions 61, 63, 148, 184, 240, and 313 each coordinate Zn(2+). An N6-carboxylysine modification is found at lysine 148.

This sequence belongs to the metallo-dependent hydrolases superfamily. Allantoinase family. In terms of assembly, homotetramer. Zn(2+) is required as a cofactor. In terms of processing, carboxylation allows a single lysine to coordinate two zinc ions.

It catalyses the reaction (S)-allantoin + H2O = allantoate + H(+). The protein operates within nitrogen metabolism; (S)-allantoin degradation; allantoate from (S)-allantoin: step 1/1. Functionally, catalyzes the conversion of allantoin (5-ureidohydantoin) to allantoic acid by hydrolytic cleavage of the five-member hydantoin ring. The sequence is that of Allantoinase from Desulfitobacterium hafniense (strain DSM 10664 / DCB-2).